The chain runs to 550 residues: Leiomodin-2 (550 aa).

Residues 1 to 47 (MSTFGYRRGLSKYESIDEDELLASLSPEELKELERELEDIEPDRNLP) are interaction with tropomyosin alpha. Interaction with actin stretches follow at residues 1–165 (MSTF…TDNS), 166–500 (KPKT…KEIK), and 524–543 (VHEN…LRRV). A phosphoserine mark is found at Ser11, Ser15, and Ser24. The span at 84 to 94 (ERLGECGKVAE) shows a compositional bias: basic and acidic residues. Disordered regions lie at residues 84-202 (ERLG…PCGN) and 359-527 (MDKQ…VHEN). Positions 91–147 (KVAEEDKEESEEELIFTESNSEVSEEVCTEDEEESQEEEEDSEEEEDSEEEEETTEA) form a coiled coil. 2 stretches are compositionally biased toward acidic residues: residues 95-105 (EDKEESEEELI) and 113-145 (VSEE…EETT). Composition is skewed to polar residues over residues 151–164 (INGT…NTDN) and 170–193 (FKSQ…NSES). The span at 359–377 (MDKQRQKRMQEQKQQEGHD) shows a compositional bias: basic and acidic residues. A compositionally biased stretch (polar residues) spans 391–402 (TPGSSPYASPRQ). Ser407 carries the phosphoserine modification. Residues 421 to 452 (PPSPVAPPPPPPPPPLPPHMLPPPPPPPAPPL) show a composition bias toward pro residues. Over residues 468–479 (QQESAQRALQNG) the composition is skewed to polar residues. Residues 480 to 490 (QRKKKGKKVKK) are compositionally biased toward basic residues. The segment covering 497-515 (KEIKNSLRSVQEKKMEDSS) has biased composition (basic and acidic residues). Residues 524–543 (VHENLMEAIRGSSIRQLRRV) enclose the WH2 domain.

This sequence belongs to the tropomodulin family. In terms of assembly, can bind at least three actin monomers and thereby provides a nucleus for actin filament formation. Interacts (via N-terminus) with tropomyosin alpha (TPM1) (via N-terminus). May also interact with TPM2 (via N-terminus). Interacts with FLII. Detected in neonate heart (at protein level). Detected in embryonic heart and in pharyngeal arches. Detected in adult heart.

The protein localises to the cytoplasm. The protein resides in the myofibril. It localises to the sarcomere. It is found in the m line. Its subcellular location is the cytoskeleton. In terms of biological role, mediates nucleation of actin filaments and thereby promotes actin polymerization. Plays a role in the regulation of actin filament length. Required for normal sarcomere organization in the heart, and for normal heart function. This chain is Leiomodin-2 (Lmod2), found in Mus musculus (Mouse).